The chain runs to 584 residues: DNA mismatch repair protein MutL (584 aa).

This sequence belongs to the DNA mismatch repair MutL/HexB family.

Functionally, this protein is involved in the repair of mismatches in DNA. It is required for dam-dependent methyl-directed DNA mismatch repair. May act as a 'molecular matchmaker', a protein that promotes the formation of a stable complex between two or more DNA-binding proteins in an ATP-dependent manner without itself being part of a final effector complex. In Buchnera aphidicola subsp. Acyrthosiphon pisum (strain Tuc7), this protein is DNA mismatch repair protein MutL.